The sequence spans 147 residues: Auxin-responsive protein SAUR41 (147 aa).

This sequence belongs to the ARG7 family. In terms of tissue distribution, specifically expressed in the quiescent center and cortex or endodermis initials of root stem niches. Expressed in vascular tissues from hypocotyls, petioles and cotyledons.

The protein localises to the cytoplasm. In terms of biological role, plays a role in the regulation of cell expansion, root meristem patterning and auxin transport. The sequence is that of Auxin-responsive protein SAUR41 from Arabidopsis thaliana (Mouse-ear cress).